Consider the following 294-residue polypeptide: Probable 2-(5''-triphosphoribosyl)-3'-dephosphocoenzyme-A synthase (294 aa).

This sequence belongs to the CitG/MdcB family.

It carries out the reaction 3'-dephospho-CoA + ATP = 2'-(5''-triphospho-alpha-D-ribosyl)-3'-dephospho-CoA + adenine. This Streptococcus pyogenes serotype M5 (strain Manfredo) protein is Probable 2-(5''-triphosphoribosyl)-3'-dephosphocoenzyme-A synthase.